The chain runs to 570 residues: Glycine--tRNA ligase (570 aa).

Substrate contacts are provided by Arg-99 and Glu-165. ATP-binding positions include Arg-197–Glu-199, Leu-207–Phe-212, Glu-324–Cys-325, and Gly-443–Arg-446. Phe-212–Glu-216 contributes to the substrate binding site. Glu-439–Gly-443 is a binding site for substrate.

It belongs to the class-II aminoacyl-tRNA synthetase family.

The protein resides in the cytoplasm. It catalyses the reaction tRNA(Gly) + glycine + ATP = glycyl-tRNA(Gly) + AMP + diphosphate. Its function is as follows. Catalyzes the attachment of glycine to tRNA(Gly). The protein is Glycine--tRNA ligase of Thermococcus sibiricus (strain DSM 12597 / MM 739).